A 689-amino-acid chain; its full sequence is MADLEAVLADVSYLMAMEKSKATPAARASKKILLPEPSIRSVMQKYLEDRGEVTFEKIFSQKLGYLLFRDFCLNYLEEAKPLVEFYEEIKKYEKLETEEERVVRSREIFDSYIMKELLACSHPFSKNATEHVQGHLVKKQVPPDLFQPYIEEICQNLRGDVFQKFIESDKFTRFCQWKNVELNIHLTMNDFSVHRIIGRGGFGEVYGCRKADTGKMYAMKCLDKKRIKMKQGETLALNERIMLSLVSTGDCPFIVCMSYAFRTPDNLSFILDLMNGGDLHYHLSQHGVFSEADMRSYAAEIILGLEHMHNRFVVYRDLKPANILLDEHGHVRISDLGLACDFSKKKPHASVGTHGYMAPEVLQKGVAYDSSADWFSLGCMLFKLLRGHSPFRQHKTKDKHEIDRMTLTMAVELPDSFSPELRSLLEGLLQRDVNRRLGCLGRGAQEVKESPFFRSLDWQMVFLQKYPPPLIPPRGEVNAADAFDIGSFDEEDTKGIKLPDSDQELYRNFPLTISERWQQEVAETVFDTINAETDRLEARKKAKNKQLGHEEDYALGKDCIMHGYMSKMGNPFLTQWQRRYFYLFPNRLEWRGEGEAPQSLLTMEEIQSVEETQIKERKCLLLKIRGGKQFVLQCDSDPELVQWKKELRDAYREAQQLVQRVPKMKNKPRSPVVELSKVPLIQRGSANGL.

The tract at residues 1 to 190 (MADLEAVLAD…ELNIHLTMND (190 aa)) is N-terminal. An RGS domain is found at 54–175 (TFEKIFSQKL…IESDKFTRFC (122 aa)). Positions 191–453 (FSVHRIIGRG…AQEVKESPFF (263 aa)) constitute a Protein kinase domain. ATP is bound by residues 197–205 (IGRGGFGEV) and Lys-220. The Proton acceptor role is filled by Asp-317. Residues 454–521 (RSLDWQMVFL…TISERWQQEV (68 aa)) enclose the AGC-kinase C-terminal domain. Positions 558–652 (DCIMHGYMSK…WKKELRDAYR (95 aa)) constitute a PH domain. Ser-670 carries the phosphoserine modification.

It belongs to the protein kinase superfamily. AGC Ser/Thr protein kinase family. GPRK subfamily. As to quaternary structure, interacts with the heterodimer formed by GNB1 and GNG2. Interacts with GIT1. Interacts with, and phosphorylates chemokine-stimulated CCR5. Interacts with ARRB1. Interacts with LPAR1 and LPAR2. Interacts with RALA in response to LPAR1 activation. ADRBK1 and RALA mutually inhibit each other's binding to LPAR1. Interacts with ADRB2.

The protein localises to the cytoplasm. It is found in the cell membrane. Its subcellular location is the postsynapse. The protein resides in the presynapse. It catalyses the reaction [beta-adrenergic receptor] + ATP = [beta-adrenergic receptor]-phosphate + ADP + H(+). Its activity is regulated as follows. In contrast to other AGC family kinases, the catalytic activity is solely regulated by the binding of substrates and ligands, not by phosphorylation of the kinase domain. Its function is as follows. Specifically phosphorylates the agonist-occupied form of the beta-adrenergic and closely related receptors, probably inducing a desensitization of them. Key regulator of LPAR1 signaling. Competes with RALA for binding to LPAR1 thus affecting the signaling properties of the receptor. Desensitizes LPAR1 and LPAR2 in a phosphorylation-independent manner. Positively regulates ciliary smoothened (SMO)-dependent Hedgehog (Hh) signaling pathway by facilitating the trafficking of SMO into the cilium and the stimulation of SMO activity. Inhibits relaxation of airway smooth muscle in response to blue light. In Mesocricetus auratus (Golden hamster), this protein is Beta-adrenergic receptor kinase 1.